The following is a 170-amino-acid chain: J domain-containing protein (170 aa).

Residues 17–82 (DYYALLGCDE…SKRALYDKWR (66 aa)) enclose the J domain. The interval 101-170 (QQSMHWSKPN…VLSKFRNYEI (70 aa)) is disordered. Positions 110 to 120 (NTKDRMLEGDG) are enriched in basic and acidic residues. The segment covering 121–134 (SKPSGPSSLGPSNP) has biased composition (low complexity).

This is J domain-containing protein (jdp) from Bombyx mori (Silk moth).